Here is an 85-residue protein sequence, read N- to C-terminus: Elongation factor 1-beta (85 aa).

It belongs to the EF-1-beta/EF-1-delta family.

Functionally, promotes the exchange of GDP for GTP in EF-1-alpha/GDP, thus allowing the regeneration of EF-1-alpha/GTP that could then be used to form the ternary complex EF-1-alpha/GTP/AAtRNA. The chain is Elongation factor 1-beta from Methanospirillum hungatei JF-1 (strain ATCC 27890 / DSM 864 / NBRC 100397 / JF-1).